Reading from the N-terminus, the 324-residue chain is Appendage-associated protein (324 aa).

A signal peptide spans 1–32 (MGCPVSRGGSPGCGRRIAEELRLAEDARLRLA). The stretch at 195–255 (IAQAKEIAQA…AADKLQALGK (61 aa)) forms a coiled coil.

It is found in the secreted. Associates with actin filament appendages that are formed in the inclusion appendages of the parasitophorous vacuole during infection of the host erythrocyte. In Anaplasma marginale (strain Florida), this protein is Appendage-associated protein (aaaP1).